Reading from the N-terminus, the 162-residue chain is Ribosomal RNA large subunit methyltransferase H (162 aa).

S-adenosyl-L-methionine contacts are provided by residues Leu78, Gly109, and 128–133 (LSPLTL).

The protein belongs to the RNA methyltransferase RlmH family. Homodimer.

It localises to the cytoplasm. It catalyses the reaction pseudouridine(1915) in 23S rRNA + S-adenosyl-L-methionine = N(3)-methylpseudouridine(1915) in 23S rRNA + S-adenosyl-L-homocysteine + H(+). In terms of biological role, specifically methylates the pseudouridine at position 1915 (m3Psi1915) in 23S rRNA. This is Ribosomal RNA large subunit methyltransferase H from Psychrobacter sp. (strain PRwf-1).